Here is a 213-residue protein sequence, read N- to C-terminus: Large ribosomal subunit protein bL25 (213 aa).

This sequence belongs to the bacterial ribosomal protein bL25 family. CTC subfamily. As to quaternary structure, part of the 50S ribosomal subunit; part of the 5S rRNA/L5/L18/L25 subcomplex. Contacts the 5S rRNA. Binds to the 5S rRNA independently of L5 and L18.

In terms of biological role, this is one of the proteins that binds to the 5S RNA in the ribosome where it forms part of the central protuberance. The sequence is that of Large ribosomal subunit protein bL25 from Mesorhizobium japonicum (strain LMG 29417 / CECT 9101 / MAFF 303099) (Mesorhizobium loti (strain MAFF 303099)).